The chain runs to 134 residues: Loki profilin-2 (134 aa).

The loki loop stretch occupies residues 55–62 (LALGEKGI).

It belongs to the Asgard profilin family.

The protein localises to the cytoplasm. The protein resides in the cytoskeleton. Inhibition of rabbit actin polymerization is reduced by phosphatidylinositol-(4,5)-P2(1,2-dipalmitoyl), a soluble form of the phospholipid phosphatidylinositol, suggesting an unknown lipid might regulate actin-profilin interaction in vivo. Binds to actin and affects the structure of the cytoskeleton. At high concentrations inhibits spontaneous rabbit actin nucleation. This strongly suggests this archaea has a profilin-regulated actin system, and actin-type genes can be identified in this organism. This Lokiarchaeum sp. (strain GC14_75) protein is Loki profilin-2.